A 372-amino-acid polypeptide reads, in one-letter code: Cytochrome b (372 aa).

4 helical membrane-spanning segments follow: residues 25-45 (FGSM…FLAI), 69-90 (WMMQ…YIHI), 105-125 (WLSG…GYVL), and 170-190 (FFAL…IHIM). Positions 75 and 89 each coordinate heme b. Residues His-174 and His-188 each contribute to the heme b site. His-193 provides a ligand contact to a ubiquinone. Helical transmembrane passes span 218–238 (HKDM…MSFM), 280–300 (LGGT…PFTH), 312–332 (LMQF…WAAT), and 339–358 (FTTI…IMNP).

Belongs to the cytochrome b family. In terms of assembly, the cytochrome bc1 complex contains 3 respiratory subunits (MT-CYB, CYC1 and UQCRFS1), 2 core proteins (UQCRC1 and UQCRC2) and probably 6 low-molecular weight proteins. Requires heme b as cofactor.

Its subcellular location is the mitochondrion inner membrane. Functionally, component of the ubiquinol-cytochrome c reductase complex (complex III or cytochrome b-c1 complex) that is part of the mitochondrial respiratory chain. The b-c1 complex mediates electron transfer from ubiquinol to cytochrome c. Contributes to the generation of a proton gradient across the mitochondrial membrane that is then used for ATP synthesis. The sequence is that of Cytochrome b (MT-CYB) from Pantherophis obsoletus (Black ratsnake).